Here is a 209-residue protein sequence, read N- to C-terminus: Small ribosomal subunit protein uS4 (209 aa).

The segment at 23–46 is disordered; it reads SRNPLLKKPHPPGQHGMQRKKKSD. An S4 RNA-binding domain is found at 93–156; that stretch reads CRLDNMVYRM…RKLQSVQESL (64 aa).

This sequence belongs to the universal ribosomal protein uS4 family. Part of the 30S ribosomal subunit. Contacts protein S5. The interaction surface between S4 and S5 is involved in control of translational fidelity.

Functionally, one of the primary rRNA binding proteins, it binds directly to 16S rRNA where it nucleates assembly of the body of the 30S subunit. Its function is as follows. With S5 and S12 plays an important role in translational accuracy. The sequence is that of Small ribosomal subunit protein uS4 from Chlamydia felis (strain Fe/C-56) (Chlamydophila felis).